A 404-amino-acid chain; its full sequence is MILPPRGTKDFTPELAILWKEIVSKIESVYQKYGFDPIITPIVEYWDTLKGKYGEEAEKKEIWRFRVPQSKKWYALKYDQTVPLARYFARFRPKLPFKRYTIDRTFRYDEPQKGRYREFWQADADIVGSPYPEADAEILNMMIEAYETLGFNVYLRVSDRRALESLIEKVGEKDKFIEIARIIDKWDKIGEEGVLEKLKQITDKAEKIIELLKENPEEFYPKEFWEIIDLVEKKNKIKIDIKLARGFDYYTGMVYEVWIEGFNRALGGGGRYDNLIGIFSKEKIPAVGGSIGINPLIDVGLEKGIFNLNKKTYTQIAVIYIEVFKEAWRIANKLRDLGLNVYIDLLRRDFKKQMEYVIEKDIRYLVIVGKKDLANNLVTFQDRLTRERKKIPIENLEEIKSLVQ.

This sequence belongs to the class-II aminoacyl-tRNA synthetase family.

The protein resides in the cytoplasm. The catalysed reaction is tRNA(His) + L-histidine + ATP = L-histidyl-tRNA(His) + AMP + diphosphate + H(+). This Nanoarchaeum equitans (strain Kin4-M) protein is Histidine--tRNA ligase.